The chain runs to 201 residues: UPF0301 protein Arad_1256 (201 aa).

The protein belongs to the UPF0301 (AlgH) family.

The chain is UPF0301 protein Arad_1256 from Rhizobium rhizogenes (strain K84 / ATCC BAA-868) (Agrobacterium radiobacter).